We begin with the raw amino-acid sequence, 96 residues long: Cell division protein FtsB (96 aa).

The Cytoplasmic portion of the chain corresponds to Met-1–Ile-11. A helical membrane pass occupies residues Phe-12–Phe-29. At Ser-30–Lys-96 the chain is on the periplasmic side.

The protein belongs to the FtsB family. Part of a complex composed of FtsB, FtsL and FtsQ.

The protein localises to the cell inner membrane. Essential cell division protein. May link together the upstream cell division proteins, which are predominantly cytoplasmic, with the downstream cell division proteins, which are predominantly periplasmic. This chain is Cell division protein FtsB, found in Francisella tularensis subsp. tularensis (strain SCHU S4 / Schu 4).